The sequence spans 324 residues: Probable UDP-sugar transporter protein SLC35A4 (324 aa).

Residues 1 to 18 (MSVEDGGVPGLARPRQAR) are Cytoplasmic-facing. Residues 19–39 (WTLLLFLSTAMYGAHAPFLAL) form a helical membrane-spanning segment. Over 40–52 (CHVDGRVPFRPSS) the chain is Lumenal. The helical transmembrane segment at 53–73 (AVLLTELTKLLLCAFSLLVGW) threads the bilayer. Over 74 to 85 (QTWPQGTPPWRQ) the chain is Cytoplasmic. Residues 86–106 (AVPFALSALLYGANNNLVIYL) form a helical membrane-spanning segment. Over 107-142 (QRYMDPSTYQVLSNLKIGSTALLYCLCLGHRLSARQ) the chain is Lumenal. A helical membrane pass occupies residues 143–163 (GLALLLLMAAGACYASGGFQE). Over 164-180 (PVNTLPGPASAAGAHPM) the chain is Cytoplasmic. The chain crosses the membrane as a helical span at residues 181 to 201 (PLHITPLGLLLLILYCLISGL). Over 202–214 (SSVYTELIMKRQR) the chain is Lumenal. Residues 215-235 (LPLALQNLFLYTFGVILNFGL) traverse the membrane as a helical segment. The Cytoplasmic portion of the chain corresponds to 236–248 (YAGSGPGPGFLEG). The helical transmembrane segment at 249-271 (FSGWAVLVVLNQAVNGLLMSAVM) threads the bilayer. At 272-279 (KHGSSITR) the chain is on the lumenal side. Residues 280–300 (LFIVSCSLVVNAVLSAVLLQL) form a helical membrane-spanning segment. Residues 301-324 (QLTAIFFLAALLIGLAVCLYYGSP) lie on the Cytoplasmic side of the membrane.

It belongs to the nucleotide-sugar transporter family. SLC35A subfamily. Found in a complex with SLC35A2 and SLC35A3.

Its subcellular location is the golgi apparatus membrane. The enzyme catalyses CDP-L-ribitol(in) + CDP(out) = CDP-L-ribitol(out) + CDP(in). Functionally, mediates the transport of CDP-ribitol. Does not exhibit CMP-sialic acid, UDP-galactose and UDP-N-acetylglucosamine transport activity. In Mus musculus (Mouse), this protein is Probable UDP-sugar transporter protein SLC35A4.